Consider the following 130-residue polypeptide: Small ribosomal subunit protein uS9 (130 aa).

Belongs to the universal ribosomal protein uS9 family.

This is Small ribosomal subunit protein uS9 from Vibrio atlanticus (strain LGP32) (Vibrio splendidus (strain Mel32)).